The following is a 215-amino-acid chain: MEAAGCSYQFRIALLGDAGVGKTSLLRCYVAGARGAAEPDPEPTVGVEFYSRALQLPAGLRVKLQLWDTAGQECFRCITRSFYRNMVGVLLVFDVTNRESFEHIQAWHQEVVSTQGPDKVVFLLVGHKCDLNTRCVSSQEAEELAASLGMGFMETSAKSNCNVDLAFDTVTSAIEQALQQGDIKLDKDWAGVRLLHRSPNPRSSSRKQDSGTCQC.

Residues Gly19, Gly21, Lys22, Thr23, and Thr44 each coordinate GTP. 3 residues coordinate Mg(2+): Thr23, Thr44, and Asp68. Residues Gly71, Lys128, Asp130, Ala157, and Lys158 each coordinate GTP. Residues 196-215 (HRSPNPRSSSRKQDSGTCQC) are disordered. S-geranylgeranyl cysteine attachment occurs at residues Cys213 and Cys215.

The protein belongs to the small GTPase superfamily. Rab family. Requires Mg(2+) as cofactor.

Its subcellular location is the membrane. The catalysed reaction is GTP + H2O = GDP + phosphate + H(+). Regulated by guanine nucleotide exchange factors (GEFs) which promote the exchange of bound GDP for free GTP. Regulated by GTPase activating proteins (GAPs) which increase the GTP hydrolysis activity. Inhibited by GDP dissociation inhibitors (GDIs). The small GTPases Rab are key regulators of intracellular membrane trafficking, from the formation of transport vesicles to their fusion with membranes. Rabs cycle between an inactive GDP-bound form and an active GTP-bound form that is able to recruit to membranes different sets of downstream effectors directly responsible for vesicle formation, movement, tethering and fusion. The physiological function of RAB42 remains undefined. The protein is Ras-related protein Rab-42 of Mus musculus (Mouse).